The primary structure comprises 324 residues: NADH-quinone oxidoreductase subunit H (324 aa).

8 helical membrane passes run 11–31 (ILIT…CGAF), 81–101 (VIFT…FAIV), 114–134 (IGIL…LFAG), 154–174 (VSYE…AGSF), 186–206 (LWNV…GVAV), 237–257 (FFVG…TLFF), 264–284 (ILPP…MFIL), and 304–324 (VCLP…LYNA).

This sequence belongs to the complex I subunit 1 family. NDH-1 is composed of 13 different subunits. Subunits NuoA, H, J, K, L, M, N constitute the membrane sector of the complex.

It localises to the cell inner membrane. The catalysed reaction is a quinone + NADH + 5 H(+)(in) = a quinol + NAD(+) + 4 H(+)(out). Its function is as follows. NDH-1 shuttles electrons from NADH, via FMN and iron-sulfur (Fe-S) centers, to quinones in the respiratory chain. The immediate electron acceptor for the enzyme in this species is believed to be ubiquinone. Couples the redox reaction to proton translocation (for every two electrons transferred, four hydrogen ions are translocated across the cytoplasmic membrane), and thus conserves the redox energy in a proton gradient. This subunit may bind ubiquinone. The chain is NADH-quinone oxidoreductase subunit H from Pectobacterium carotovorum subsp. carotovorum (strain PC1).